A 224-amino-acid polypeptide reads, in one-letter code: 7-cyano-7-deazaguanine synthase (224 aa).

Residue 11 to 21 coordinates ATP; the sequence is FSGGQDSTTCL. Cys-190, Cys-199, Cys-202, and Cys-205 together coordinate Zn(2+).

Belongs to the QueC family. The cofactor is Zn(2+).

The catalysed reaction is 7-carboxy-7-deazaguanine + NH4(+) + ATP = 7-cyano-7-deazaguanine + ADP + phosphate + H2O + H(+). The protein operates within purine metabolism; 7-cyano-7-deazaguanine biosynthesis. Catalyzes the ATP-dependent conversion of 7-carboxy-7-deazaguanine (CDG) to 7-cyano-7-deazaguanine (preQ(0)). The protein is 7-cyano-7-deazaguanine synthase of Parabacteroides distasonis (strain ATCC 8503 / DSM 20701 / CIP 104284 / JCM 5825 / NCTC 11152).